A 401-amino-acid chain; its full sequence is F-box protein At2g43440 (401 aa).

Residues 7-53 (NTNSIYIVPELLEDIFLRLPLKSILKFKTVSRQWRSILESKLFVERR) enclose the F-box domain.

This is F-box protein At2g43440 from Arabidopsis thaliana (Mouse-ear cress).